Consider the following 173-residue polypeptide: Lipoprotein signal peptidase (173 aa).

4 helical membrane passes run 24–44, 55–75, 80–100, and 105–125; these read PWLG…IAIL, ITGF…SFLA, WQRW…VWLL, and GQKL…GNVI. Residues Asp-135 and Asp-153 contribute to the active site. Residues 145–165 form a helical membrane-spanning segment; the sequence is HWPAFNVADCGICIGAVLLII.

Belongs to the peptidase A8 family.

The protein localises to the cell inner membrane. It carries out the reaction Release of signal peptides from bacterial membrane prolipoproteins. Hydrolyzes -Xaa-Yaa-Zaa-|-(S,diacylglyceryl)Cys-, in which Xaa is hydrophobic (preferably Leu), and Yaa (Ala or Ser) and Zaa (Gly or Ala) have small, neutral side chains.. Its pathway is protein modification; lipoprotein biosynthesis (signal peptide cleavage). This protein specifically catalyzes the removal of signal peptides from prolipoproteins. This chain is Lipoprotein signal peptidase, found in Ralstonia nicotianae (strain ATCC BAA-1114 / GMI1000) (Ralstonia solanacearum).